The primary structure comprises 302 residues: GTPase Era (302 aa).

The region spanning 10-178 (RCGYVAIVGR…EAQIAKHLPE (169 aa)) is the Era-type G domain. A G1 region spans residues 18 to 25 (GRPNVGKS). GTP is bound at residue 18 to 25 (GRPNVGKS). A G2 region spans residues 44–48 (QTTRH). Residues 65–68 (DTPG) are G3. GTP contacts are provided by residues 65 to 69 (DTPGM) and 127 to 130 (NKTD). The tract at residues 127–130 (NKTD) is G4. Residues 157–159 (ISA) form a G5 region. The KH type-2 domain occupies 201 to 285 (VREKIMRQLG…MLNLWVKVKG (85 aa)).

This sequence belongs to the TRAFAC class TrmE-Era-EngA-EngB-Septin-like GTPase superfamily. Era GTPase family. Monomer.

It localises to the cytoplasm. Its subcellular location is the cell inner membrane. In terms of biological role, an essential GTPase that binds both GDP and GTP, with rapid nucleotide exchange. Plays a role in 16S rRNA processing and 30S ribosomal subunit biogenesis and possibly also in cell cycle regulation and energy metabolism. This Pseudomonas putida (strain ATCC 47054 / DSM 6125 / CFBP 8728 / NCIMB 11950 / KT2440) protein is GTPase Era.